The sequence spans 637 residues: Acetolactate synthase 2, chloroplastic (637 aa).

Residues 1 to 73 (MASFSFFGTI…SSKYAPNVPR (73 aa)) constitute a chloroplast transit peptide. Residues 35 to 69 (RRATRVSVSANSKKDQDRTASRRENPSTFSSKYAP) are disordered. Positions 46-59 (SKKDQDRTASRREN) are enriched in basic and acidic residues. Glutamate 120 provides a ligand contact to thiamine diphosphate. Residues arginine 222, 329–350 (HGTV…FGVR), and 372–391 (DIDS…VCCD) contribute to the FAD site. The tract at residues 462–542 (QHQMWAAQFY…VKVLLINNQH (81 aa)) is thiamine pyrophosphate binding. The Mg(2+) site is built by aspartate 513 and asparagine 540.

This sequence belongs to the TPP enzyme family. The cofactor is Mg(2+). It depends on thiamine diphosphate as a cofactor.

It localises to the plastid. The protein resides in the chloroplast. It catalyses the reaction 2 pyruvate + H(+) = (2S)-2-acetolactate + CO2. It participates in amino-acid biosynthesis; L-isoleucine biosynthesis; L-isoleucine from 2-oxobutanoate: step 1/4. The protein operates within amino-acid biosynthesis; L-valine biosynthesis; L-valine from pyruvate: step 1/4. The chain is Acetolactate synthase 2, chloroplastic from Brassica napus (Rape).